The sequence spans 406 residues: Coenzyme A biosynthesis bifunctional protein CoaBC (406 aa).

Residues 1 to 191 (MLNNRNVLLC…ETSAPLEGKH (191 aa)) form a phosphopantothenoylcysteine decarboxylase region. Residue C157 is the Proton donor of the active site. Residues 192 to 406 (VVITAGPTRE…ALSKQTGERS (215 aa)) form a phosphopantothenate--cysteine ligase region. Residues D281, K291, F325, K339, and K343 each coordinate CTP.

In the N-terminal section; belongs to the HFCD (homo-oligomeric flavin containing Cys decarboxylase) superfamily. This sequence in the C-terminal section; belongs to the PPC synthetase family. Mg(2+) is required as a cofactor. It depends on FMN as a cofactor.

The enzyme catalyses N-[(R)-4-phosphopantothenoyl]-L-cysteine + H(+) = (R)-4'-phosphopantetheine + CO2. The catalysed reaction is (R)-4'-phosphopantothenate + L-cysteine + CTP = N-[(R)-4-phosphopantothenoyl]-L-cysteine + CMP + diphosphate + H(+). It functions in the pathway cofactor biosynthesis; coenzyme A biosynthesis; CoA from (R)-pantothenate: step 2/5. Its pathway is cofactor biosynthesis; coenzyme A biosynthesis; CoA from (R)-pantothenate: step 3/5. Functionally, catalyzes two sequential steps in the biosynthesis of coenzyme A. In the first step cysteine is conjugated to 4'-phosphopantothenate to form 4-phosphopantothenoylcysteine. In the second step the latter compound is decarboxylated to form 4'-phosphopantotheine. This is Coenzyme A biosynthesis bifunctional protein CoaBC from Bacillus subtilis (strain 168).